Consider the following 487-residue polypeptide: MAVESRSRVTSKLVKAHRAMLNSVTQEDLKVDRLPGADYPNPSKKYSSRTEFRDKTDYIMYNPRPRDEPSSENPVSVSPLLCELAAARSRIHFNPTETTIGIVTCGGICPGLNDVIRSITLTGINVYNVKRVIGFRFGYWGLSKKGSQTAIELHRGRVTNIHHYGGTILGSSRGPQDPKEMVDTLERLGVNILFTVGGDGTQRGALVISQEAKRRGVDISVFGVPKTIDNDLSFSHRTFGFQTAVEKAVQAIRAAYAEAVSANYGVGVVKLMGRDSGFIAAQAAVASAQANICLVPENPISEQEVMSLLERRFCHSRSCVIIVAEGFGQDWGRGSGGYDASGNKKLIDIGVILTEKVKAFLKANKSRYPDSTVKYIDPSYMIRACPPSANDALFCATLATLAVHEAMAGATGCIIAMRHNNYILVPIKVATSVRRVLDLRGQLWRQVREITVDLGSDVRLARKLEIRRELEAINRNRDRLHEELAKL.

Residues Gly107, 173 to 174 (RG), 198 to 201 (GDGT), and Lys226 each bind ATP. Mg(2+) is bound at residue Asp199. Substrate-binding positions include 227-229 (TID), 272-274 (MGR), and Glu325. Catalysis depends on Asp229, which acts as the Proton acceptor. 341–343 (SGN) is an ATP binding site. Substrate is bound at residue 380 to 383 (YMIR). Residues 485–487 (AKL) carry the Peroxisomal targeting signal motif.

Belongs to the phosphofructokinase type A (PFKA) family. PPi-dependent PFK group II subfamily. Atypical ATP-dependent clade 'X' sub-subfamily. In terms of assembly, homotetramer. It depends on Mg(2+) as a cofactor.

It localises to the glycosome. The catalysed reaction is beta-D-fructose 6-phosphate + ATP = beta-D-fructose 1,6-bisphosphate + ADP + H(+). Its pathway is carbohydrate degradation; glycolysis; D-glyceraldehyde 3-phosphate and glycerone phosphate from D-glucose: step 3/4. Allosterically activated by AMP. Catalyzes the phosphorylation of D-fructose 6-phosphate to fructose 1,6-bisphosphate by ATP, the first committing step of glycolysis. The polypeptide is ATP-dependent 6-phosphofructokinase (Trypanosoma brucei brucei).